The following is a 194-amino-acid chain: Ferredoxin, apicoplast (194 aa).

The transit peptide at 1–19 directs the protein to the apicoplast; that stretch reads MNIVILLLILTFSIKHSNT. A 2Fe-2S ferredoxin-type domain is found at 99–189; that stretch reads YNITLRTNDG…DCVIETHKED (91 aa). Residues cysteine 135, cysteine 140, cysteine 143, and cysteine 173 each contribute to the [2Fe-2S] cluster site.

The protein belongs to the 2Fe2S plant-type ferredoxin family. Requires [2Fe-2S] cluster as cofactor.

It is found in the plastid. It localises to the apicoplast. Ferredoxins are iron-sulfur proteins that transfer electrons in a wide variety of metabolic reactions. By transferring electrons to 4-hydroxy-3-methylbut-2-enyl diphosphate reductase LytB/IspH, plays a role in the terminal step of the DOXP/MEP pathway for isoprenoid precursor biosynthesis. The polypeptide is Ferredoxin, apicoplast (Plasmodium falciparum (isolate 3D7)).